Here is a 195-residue protein sequence, read N- to C-terminus: Interferon tau-9 (195 aa).

An N-terminal signal peptide occupies residues 1-23 (MAFVLSLLMALVLVSYGPGGSLG). Cystine bridges form between Cys-24–Cys-122 and Cys-52–Cys-162.

It belongs to the alpha/beta interferon family. IFN-alphaII subfamily. In terms of tissue distribution, constitutively and exclusively expressed in the mononuclear cells of the extraembryonic trophectoderm.

It is found in the secreted. Its function is as follows. Paracrine hormone primarily responsible for maternal recognition of pregnancy. Interacts with endometrial receptors, probably type I interferon receptors, and blocks estrogen receptor expression, preventing the estrogen-induced increase in oxytocin receptor expression in the endometrium. This results in the suppression of the pulsatile endometrial release of the luteolytic hormone prostaglandin F2-alpha, hindering the regression of the corpus luteum (luteolysis) and therefore a return to ovarian cyclicity. This, and a possible direct effect of IFN-tau on prostaglandin synthesis, leads in turn to continued ovarian progesterone secretion, which stimulates the secretion by the endometrium of the nutrients required for the growth of the conceptus. In summary, displays particularly high antiviral and antiproliferative potency concurrently with particular weak cytotoxicity, high antiluteolytic activity and immunomodulatory properties. In contrast with other IFNs, IFN-tau is not virally inducible. The polypeptide is Interferon tau-9 (IFNT9) (Ovis aries (Sheep)).